The sequence spans 467 residues: Mothers against decapentaplegic homolog 9 (467 aa).

Residues 16-140 form the MH1 domain; the sequence is PAVKRLLGWK…YRRVETPVLP (125 aa). 4 residues coordinate Zn(2+): Cys68, Cys113, Cys125, and His130. Residues 174–246 are disordered; sequence NATYPDSFQQ…SETQSGQPVD (73 aa). The segment covering 205–220 has biased composition (low complexity); that stretch reads SYPHSPGSPSEPESPY. An MH2 domain is found at 273-467; that stretch reads WCSVAYYELN…SPHNPISSVS (195 aa).

It belongs to the dwarfin/SMAD family. In terms of assembly, interaction with the co-SMAD SMAD4. Interacts with PEBP2-alpha subunit. Interacts with RANBP3L. In terms of processing, phosphorylated on serine by BMP (bone morphogenetic proteins) type 1 receptor kinase. As to expression, expressed in heart, brain, placenta, lung, skeletal muscle, prostate, testis, ovary and small intestine. Also expressed in fetal brain, lung and kidney.

The protein resides in the cytoplasm. The protein localises to the nucleus. Its function is as follows. Transcriptional modulator activated by BMP (bone morphogenetic proteins) type 1 receptor kinase. SMAD9 is a receptor-regulated SMAD (R-SMAD). This Homo sapiens (Human) protein is Mothers against decapentaplegic homolog 9 (SMAD9).